A 512-amino-acid polypeptide reads, in one-letter code: MSTPVLELRGIVKTFGATRALDGASLRVAAGSVHGLVGENGAGKSTLIKVLAGIHRPDAGSLLLDGQPHGHFSPRQVERLGIGFIHQERLLPARFTVGEALFFGHERRFGPLLDRRSQQREAARLLDDYFGLRLPANALIGELSSAEQQMVQIVRALLIKPRVLVFDEPSVALVQREVERLLRIVQRLRDDGLAIVYISHYLQEIEALCDRVTVLRNGRDVAEVSPRNTSLEQITRLMVNREVGELYPKVAVPAGALLLDVRGLGRARAYQGIDLQVRRGEIVGLTGLVGSGAKELLRSLFGLAPPDSGEVRLDGQPLSLRSPREAVAQGVALMPEERRRQGVALDLSVQENTTLAALSRFVRLGLLSPARERHTTLELIERLRIKAHGAHAKVRQLSGGNQQKVALAKWFARCSSLYLLDEPSVGIDVGAKVEIYRLIGELVKEGAGVLILSSDLPELIGLCDRIHVMHRGAIAARFAAGEANSDRLLAVATGAQRAQNEERPFYAYAIAI.

2 consecutive ABC transporter domains span residues 6–242 (LELR…VNRE) and 252–496 (VPAG…TGAQ). 38–45 (GENGAGKS) provides a ligand contact to ATP.

Belongs to the ABC transporter superfamily. Ribose importer (TC 3.A.1.2.1) family. In terms of assembly, the complex is composed of an ATP-binding protein (RbsA), two transmembrane proteins (RbsC) and a solute-binding protein (RbsB).

The protein localises to the cell inner membrane. The catalysed reaction is D-ribose(out) + ATP + H2O = D-ribose(in) + ADP + phosphate + H(+). In terms of biological role, part of the ABC transporter complex RbsABC involved in ribose import. Responsible for energy coupling to the transport system. The polypeptide is Ribose import ATP-binding protein RbsA (Pseudomonas putida (strain ATCC 47054 / DSM 6125 / CFBP 8728 / NCIMB 11950 / KT2440)).